The primary structure comprises 724 residues: Protein BCH1 (724 aa).

The span at 51-65 (TTATASANDNGATSN) shows a compositional bias: low complexity. Residues 51 to 71 (TTATASANDNGATSNINGQDP) are disordered. The CHS5-binding stretch occupies residues 711–724 (LNFLKNFTNDTFDN).

It belongs to the CHAPS family. Component of the CHS5/6 complex composed of the 4 CHAPS proteins BCH1, BCH2, BUD7, and CHS6 as well as at least CHS5 and GTP-bound ARF1. The complex interacts with the cargo protein CHS3.

Its subcellular location is the golgi apparatus. It localises to the trans-Golgi network membrane. Member of the CHS5-ARF1P-binding proteins (CHAPS) which mediates export of specific cargo proteins, including chitin synthase CHS3. This chain is Protein BCH1 (BCH1), found in Saccharomyces cerevisiae (strain ATCC 204508 / S288c) (Baker's yeast).